A 251-amino-acid chain; its full sequence is tRNA1(Val) (adenine(37)-N6)-methyltransferase (251 aa).

Belongs to the methyltransferase superfamily. tRNA (adenine-N(6)-)-methyltransferase family.

The protein resides in the cytoplasm. The enzyme catalyses adenosine(37) in tRNA1(Val) + S-adenosyl-L-methionine = N(6)-methyladenosine(37) in tRNA1(Val) + S-adenosyl-L-homocysteine + H(+). Specifically methylates the adenine in position 37 of tRNA(1)(Val) (anticodon cmo5UAC). The protein is tRNA1(Val) (adenine(37)-N6)-methyltransferase of Shewanella frigidimarina (strain NCIMB 400).